The primary structure comprises 253 residues: Ribosomal RNA small subunit methyltransferase G (253 aa).

S-adenosyl-L-methionine-binding positions include G84, L89, 136 to 137 (IE), and R155.

It belongs to the methyltransferase superfamily. RNA methyltransferase RsmG family.

Its subcellular location is the cytoplasm. Specifically methylates the N7 position of a guanine in 16S rRNA. In Prochlorococcus marinus (strain SARG / CCMP1375 / SS120), this protein is Ribosomal RNA small subunit methyltransferase G.